We begin with the raw amino-acid sequence, 396 residues long: S-adenosylmethionine synthase (396 aa).

ATP is bound at residue H15. Mg(2+) is bound at residue D17. E43 lines the K(+) pocket. L-methionine contacts are provided by E56 and Q99. The flexible loop stretch occupies residues 99 to 109 (QSGDIAQGVDT). ATP contacts are provided by residues 173–175 (DGK), 241–242 (RF), D250, 256–257 (RK), A273, and K277. D250 lines the L-methionine pocket. K281 provides a ligand contact to L-methionine.

Belongs to the AdoMet synthase family. Homotetramer; dimer of dimers. Requires Mg(2+) as cofactor. K(+) serves as cofactor.

The protein resides in the cytoplasm. It carries out the reaction L-methionine + ATP + H2O = S-adenosyl-L-methionine + phosphate + diphosphate. The protein operates within amino-acid biosynthesis; S-adenosyl-L-methionine biosynthesis; S-adenosyl-L-methionine from L-methionine: step 1/1. In terms of biological role, catalyzes the formation of S-adenosylmethionine (AdoMet) from methionine and ATP. The overall synthetic reaction is composed of two sequential steps, AdoMet formation and the subsequent tripolyphosphate hydrolysis which occurs prior to release of AdoMet from the enzyme. The protein is S-adenosylmethionine synthase of Nocardioides sp. (strain ATCC BAA-499 / JS614).